The sequence spans 189 residues: Crossover junction endodeoxyribonuclease RuvC (189 aa).

Catalysis depends on residues Asp7, Glu68, and Asp141. Residues Asp7, Glu68, and Asp141 each coordinate Mg(2+).

This sequence belongs to the RuvC family. Homodimer which binds Holliday junction (HJ) DNA. The HJ becomes 2-fold symmetrical on binding to RuvC with unstacked arms; it has a different conformation from HJ DNA in complex with RuvA. In the full resolvosome a probable DNA-RuvA(4)-RuvB(12)-RuvC(2) complex forms which resolves the HJ. Mg(2+) is required as a cofactor.

The protein localises to the cytoplasm. It carries out the reaction Endonucleolytic cleavage at a junction such as a reciprocal single-stranded crossover between two homologous DNA duplexes (Holliday junction).. Functionally, the RuvA-RuvB-RuvC complex processes Holliday junction (HJ) DNA during genetic recombination and DNA repair. Endonuclease that resolves HJ intermediates. Cleaves cruciform DNA by making single-stranded nicks across the HJ at symmetrical positions within the homologous arms, yielding a 5'-phosphate and a 3'-hydroxyl group; requires a central core of homology in the junction. The consensus cleavage sequence is 5'-(A/T)TT(C/G)-3'. Cleavage occurs on the 3'-side of the TT dinucleotide at the point of strand exchange. HJ branch migration catalyzed by RuvA-RuvB allows RuvC to scan DNA until it finds its consensus sequence, where it cleaves and resolves the cruciform DNA. The chain is Crossover junction endodeoxyribonuclease RuvC from Rhodococcus jostii (strain RHA1).